Here is a 376-residue protein sequence, read N- to C-terminus: Putative F-box/FBD/LRR-repeat protein At5g52460 (376 aa).

The 60-residue stretch at 16–75 (RDEISSLPDDLLIQILLLVPIKDAVGTMILSKRWRYVWTLLPKLEYSDPGDECESVWKFL) folds into the F-box domain. LRR repeat units follow at residues 131 to 154 (CKTL…VCLP) and 199 to 224 (FAKV…KFLK). In terms of domain architecture, FBD spans 296–348 (CHGTNQGTVPRCLSAHLDEEFVWHGYRGNEEETQLIRYIFANAKCLKKREIST).

In Arabidopsis thaliana (Mouse-ear cress), this protein is Putative F-box/FBD/LRR-repeat protein At5g52460 (EDA41).